The following is a 475-amino-acid chain: MELPSHKTKIIATIGPASKQKETIKKMIKAGMSVARINFSHGTLEEHAKTIETVRDVAEKLERRVAILGDLPGLKMRVGKIKGDSVTLRKGDKVVLTTRDIEGDETTIPVEFKDLPKLVSKGDTIYLSDGYIMLRVEEVRENEVECVVVNGGILFSHKGINIPKANLPIEAITPRDFEIIEFAIEHGVDAIGLSFVGSVYDVLKVKSFLEKKSADLFVIAKIERPDAVRNFDEILNAADGIMIARGDLGVEMPIEKLPIMQKQLIKKTNLAAKPVITATQMLVSMTTERIPKRAEVTDVANAILDGTDAVMLSEETAIGKYPVESVEMMAKIAKTTEEYRESLGYSRLRAWIDSLPKRSTIKEAITRSVIDALCAIDIKYILTPTRTGLTPRLISRFKPKQWILAFSSSERVCNNLAFSYGVYPFCMDENFNEKDIIMLVKGLGIVKEDDTVLLTEGRPIGKTVGTNTMRIFQIP.

Residue R36 participates in substrate binding. N38, S40, and D70 together coordinate K(+). 38 to 41 lines the ATP pocket; that stretch reads NFSH. 2 residues coordinate ATP: R77 and K158. Position 223 (E223) interacts with Mg(2+). Substrate is bound by residues G246, D247, and T279. D247 contacts Mg(2+).

This sequence belongs to the pyruvate kinase family. In terms of assembly, homotetramer. The cofactor is a divalent metal cation.

The enzyme catalyses pyruvate + ATP = phosphoenolpyruvate + ADP + H(+). The protein operates within carbohydrate degradation; glycolysis; pyruvate from D-glyceraldehyde 3-phosphate: step 5/5. This is Pyruvate kinase (pki) from Thermococcus litoralis (strain ATCC 51850 / DSM 5473 / JCM 8560 / NS-C).